We begin with the raw amino-acid sequence, 195 residues long: MRKEGKFIIIGRPGSGKSTCIMLLLEKLRASGTKVGGIRTPELRERGIRKGFAVEDILTGQSDIFASTDFREGPSVSKYRVSVERFESIAIPALRRALEECEVVVIDEIGKMELLSRNFLEVVRDIWESEIISVGTAPLVRIEEIEKLKSSSEVIIIERGDSERISNYLFNRISDLLRVSRSSHRPSPRGTLSFL.

Residues 11 to 18 (GRPGSGKS) and 103 to 110 (VVVIDEIG) contribute to the ATP site.

This sequence belongs to the THEP1 NTPase family.

The enzyme catalyses a ribonucleoside 5'-triphosphate + H2O = a ribonucleoside 5'-diphosphate + phosphate + H(+). Its function is as follows. Has nucleotide phosphatase activity towards ATP, GTP, CTP, TTP and UTP. May hydrolyze nucleoside diphosphates with lower efficiency. This Korarchaeum cryptofilum (strain OPF8) protein is Nucleoside-triphosphatase THEP1.